The chain runs to 239 residues: Ribosomal RNA large subunit methyltransferase E (239 aa).

The segment at 1–20 (MTKAPIAGNRTGRKLGQRVK) is disordered. Over residues 11–20 (TGRKLGQRVK) the composition is skewed to basic residues. 5 residues coordinate S-adenosyl-L-methionine: Gly81, Trp83, Asp104, Asp120, and Asp144. Lys184 functions as the Proton acceptor in the catalytic mechanism.

Belongs to the class I-like SAM-binding methyltransferase superfamily. RNA methyltransferase RlmE family.

The protein resides in the cytoplasm. The enzyme catalyses uridine(2552) in 23S rRNA + S-adenosyl-L-methionine = 2'-O-methyluridine(2552) in 23S rRNA + S-adenosyl-L-homocysteine + H(+). Functionally, specifically methylates the uridine in position 2552 of 23S rRNA at the 2'-O position of the ribose in the fully assembled 50S ribosomal subunit. The polypeptide is Ribosomal RNA large subunit methyltransferase E (Rhizobium johnstonii (strain DSM 114642 / LMG 32736 / 3841) (Rhizobium leguminosarum bv. viciae)).